The primary structure comprises 421 residues: UDP-N-acetylglucosamine 1-carboxyvinyltransferase (421 aa).

Residue 22 to 23 coordinates phosphoenolpyruvate; it reads KN. Residue Arg-93 coordinates UDP-N-acetyl-alpha-D-glucosamine. Cys-117 (proton donor) is an active-site residue. Cys-117 is modified (2-(S-cysteinyl)pyruvic acid O-phosphothioketal). UDP-N-acetyl-alpha-D-glucosamine is bound by residues 122–126, Asp-308, and Val-330; that span reads RPVDL.

This sequence belongs to the EPSP synthase family. MurA subfamily.

The protein localises to the cytoplasm. The catalysed reaction is phosphoenolpyruvate + UDP-N-acetyl-alpha-D-glucosamine = UDP-N-acetyl-3-O-(1-carboxyvinyl)-alpha-D-glucosamine + phosphate. It participates in cell wall biogenesis; peptidoglycan biosynthesis. Its function is as follows. Cell wall formation. Adds enolpyruvyl to UDP-N-acetylglucosamine. The protein is UDP-N-acetylglucosamine 1-carboxyvinyltransferase of Pseudomonas paraeruginosa (strain DSM 24068 / PA7) (Pseudomonas aeruginosa (strain PA7)).